A 57-amino-acid polypeptide reads, in one-letter code: Small ribosomal subunit protein bS21 (57 aa).

Residues 22–57 are disordered; that stretch reads QCSKSGVLSEAKKRKHYEKPSEKRKRKATEKRNSRK. Positions 33-57 are enriched in basic residues; the sequence is KKRKHYEKPSEKRKRKATEKRNSRK.

It belongs to the bacterial ribosomal protein bS21 family.

The chain is Small ribosomal subunit protein bS21 from Natranaerobius thermophilus (strain ATCC BAA-1301 / DSM 18059 / JW/NM-WN-LF).